The primary structure comprises 120 residues: Immunoglobulin lambda variable 2-14 (120 aa).

Residues 1–19 (MAWALLLLTLLTQGTGSWA) form the signal peptide. Gln-20 carries the post-translational modification Pyrrolidone carboxylic acid. Residues 20–44 (QSALTQPASVSGSPGQSITISCTGT) form a framework-1 region. Residues 20–119 (QSALTQPASV…SSYTSSSTLH (100 aa)) enclose the Ig-like domain. Cys-41 and Cys-109 are oxidised to a cystine. The interval 45–53 (SSDVGGYNY) is complementarity-determining-1. The segment at 54-70 (VSWYQQHPGKAPKLMIY) is framework-2. The complementarity-determining-2 stretch occupies residues 71-73 (EVS). The tract at residues 74–109 (NRPSGVSNRFSGSKSGNTASLTISGLQAEDEADYYC) is framework-3. The segment at 110–119 (SSYTSSSTLH) is complementarity-determining-3.

As to quaternary structure, immunoglobulins are composed of two identical heavy chains and two identical light chains; disulfide-linked.

Its subcellular location is the secreted. It is found in the cell membrane. V region of the variable domain of immunoglobulin light chains that participates in the antigen recognition. Immunoglobulins, also known as antibodies, are membrane-bound or secreted glycoproteins produced by B lymphocytes. In the recognition phase of humoral immunity, the membrane-bound immunoglobulins serve as receptors which, upon binding of a specific antigen, trigger the clonal expansion and differentiation of B lymphocytes into immunoglobulins-secreting plasma cells. Secreted immunoglobulins mediate the effector phase of humoral immunity, which results in the elimination of bound antigens. The antigen binding site is formed by the variable domain of one heavy chain, together with that of its associated light chain. Thus, each immunoglobulin has two antigen binding sites with remarkable affinity for a particular antigen. The variable domains are assembled by a process called V-(D)-J rearrangement and can then be subjected to somatic hypermutations which, after exposure to antigen and selection, allow affinity maturation for a particular antigen. This is Immunoglobulin lambda variable 2-14 from Homo sapiens (Human).